Consider the following 279-residue polypeptide: UPF0173 metal-dependent hydrolase MXAN_1394 (279 aa).

It belongs to the UPF0173 family.

This chain is UPF0173 metal-dependent hydrolase MXAN_1394, found in Myxococcus xanthus (strain DK1622).